The sequence spans 87 residues: Large ribosomal subunit protein eL31 (87 aa).

This sequence belongs to the eukaryotic ribosomal protein eL31 family.

In Methanocorpusculum labreanum (strain ATCC 43576 / DSM 4855 / Z), this protein is Large ribosomal subunit protein eL31.